Here is a 340-residue protein sequence, read N- to C-terminus: Adenosine receptor A2b (340 aa).

Residues 1–6 are Extracellular-facing; the sequence is MNTMKT. Residues 7–31 form a helical membrane-spanning segment; it reads TYIVLELIIAVLSIAGNVLVCWAVA. Topologically, residues 32-41 are cytoplasmic; it reads INSTLKNATN. Residues 42–65 form a helical membrane-spanning segment; it reads YFLVSLAVADIAVGLLAIPFAITI. Residues 66–76 are Extracellular-facing; that stretch reads SIGFQVDFHSC. Cys76 and Cys171 are disulfide-bonded. A helical transmembrane segment spans residues 77 to 99; the sequence is LFFACFVLVLTQSSIFSLLAVAI. Topologically, residues 100-119 are cytoplasmic; the sequence is DRYLAIKIPLRYNSLVTGKR. A helical membrane pass occupies residues 120-142; the sequence is ARGLIAVLWLLSFVIGLTPLMGW. Topologically, residues 143–178 are extracellular; the sequence is NKAMSGCPNSTNETGADHGAGHHGCFISCLFENVVT. Residues Asn151 and Asn154 are each glycosylated (N-linked (GlcNAc...) asparagine). Glu174 is an adenosine binding site. Residues 179 to 203 traverse the membrane as a helical segment; it reads MSYMVYFNFFGCVLLPLIIMLGIYI. Residues 204-235 are Cytoplasmic-facing; sequence KIFMVACKQLHQIELMGNSRTTLQKEVHAAKS. The chain crosses the membrane as a helical span at residues 236–259; it reads LAIIVGLFAFCWLPLHILNCITHF. Asn254 is a binding site for adenosine. The Extracellular portion of the chain corresponds to 260 to 267; it reads HEEFSKSK. A helical transmembrane segment spans residues 268–291; that stretch reads PEWVMYVAIILSHANSVINPIIYA. Adenosine contacts are provided by Ser279 and His280. Topologically, residues 292-340 are cytoplasmic; it reads YRIRDFRYTFHKIISKILCKTDDFPKCTTDNNQHLTVTNVNAPAASVTI. A lipid anchor (S-palmitoyl cysteine) is attached at Cys310.

Belongs to the G-protein coupled receptor 1 family.

Its subcellular location is the cell membrane. Functionally, receptor for adenosine. The activity of this receptor is mediated by G proteins which activate adenylyl cyclase. This is Adenosine receptor A2b (ADORA2B) from Gallus gallus (Chicken).